Reading from the N-terminus, the 629-residue chain is Protein SPT2 homolog (629 aa).

Residues 1 to 522 (MDFDSVLSIA…SGHRILVKPS (522 aa)) are important for interaction with DNA. A coiled-coil region spans residues 45 to 72 (QAFLKKKAVEQKNKEQQDKKAKEDLLAK). Basic and acidic residues predominate over residues 53–93 (VEQKNKEQQDKKAKEDLLAKRVELKSDRKARAMASRTKDNF). 3 disordered regions span residues 53-181 (VEQK…ASSS), 206-533 (KTEE…TSSY), and 608-629 (EDEEEERRELEEMQRKNAKKRK). Residues 111-123 (KGSSTEEQQSSTK) are compositionally biased toward polar residues. Residues 127–144 (GDYDDEDNFDYEGTDSES) are compositionally biased toward acidic residues. The stretch at 203 to 228 (VVKKTEERLRTAEEIRELEMERRVKK) forms a coiled coil. 2 stretches are compositionally biased toward basic and acidic residues: residues 206 to 247 (KTEE…KDSR) and 257 to 277 (KHVDRDGKNGRFPRPSEEKHQ). Composition is skewed to polar residues over residues 278–297 (SSSTSKKPKLQASSERTPTS), 305–327 (SNSGSSGALNSKSAMKNGASFQA), 335–345 (SQGQRPATPSD), 353–364 (VSLTQAKSSISG), 387–398 (SNFSTSGPSQKP), 437–450 (NLQSQQFPGSSRAS), and 462–490 (SGSQINRMSSGPGRSQCTVVSETISTKNI). Residues 523–629 (GPALPPITSS…MQRKNAKKRK (107 aa)) are important for interaction with histones. A coiled-coil region spans residues 591–629 (WKEQQKEEARSLRMAVLEDEEEERRELEEMQRKNAKKRK).

This sequence belongs to the SPT2 family. In terms of assembly, interacts with histones. Interacts with a heterotetrameric complex formed by histone H3 and H4, especially when the histone tetramer is not bound to DNA.

It localises to the nucleus. The protein localises to the nucleolus. In terms of biological role, histone chaperone that stabilizes pre-existing histone tetramers and regulates replication-independent histone exchange on chromatin. Required for normal chromatin refolding in the coding region of transcribed genes, and for the suppression of spurious transcription. Binds DNA and histones and promotes nucleosome assembly (in vitro). Facilitates formation of tetrameric histone complexes containing histone H3 and H4. Modulates RNA polymerase 1-mediated transcription. Binds DNA, with a preference for branched DNA species, such as Y-form DNA and Holliday junction DNA. This chain is Protein SPT2 homolog (spty2d1), found in Danio rerio (Zebrafish).